A 201-amino-acid polypeptide reads, in one-letter code: ATP synthase subunit b 2 (201 aa).

Residues 1–17 show a composition bias toward polar residues; it reads MAEQKNPLTTPSPNADT. The segment at 1 to 39 is disordered; the sequence is MAEQKNPLTTPSPNADTTIVPAGSPHTHTEQPSGGHGGA. A helical membrane pass occupies residues 47–66; that stretch reads TFLSQLIWLALAFGLLYYLM.

Belongs to the ATPase B chain family. As to quaternary structure, F-type ATPases have 2 components, F(1) - the catalytic core - and F(0) - the membrane proton channel. F(1) has five subunits: alpha(3), beta(3), gamma(1), delta(1), epsilon(1). F(0) has three main subunits: a(1), b(2) and c(10-14). The alpha and beta chains form an alternating ring which encloses part of the gamma chain. F(1) is attached to F(0) by a central stalk formed by the gamma and epsilon chains, while a peripheral stalk is formed by the delta and b chains.

Its subcellular location is the cell inner membrane. Functionally, f(1)F(0) ATP synthase produces ATP from ADP in the presence of a proton or sodium gradient. F-type ATPases consist of two structural domains, F(1) containing the extramembraneous catalytic core and F(0) containing the membrane proton channel, linked together by a central stalk and a peripheral stalk. During catalysis, ATP synthesis in the catalytic domain of F(1) is coupled via a rotary mechanism of the central stalk subunits to proton translocation. In terms of biological role, component of the F(0) channel, it forms part of the peripheral stalk, linking F(1) to F(0). The b'-subunit is a diverged and duplicated form of b found in plants and photosynthetic bacteria. The chain is ATP synthase subunit b 2 (atpF2) from Methylorubrum extorquens (strain PA1) (Methylobacterium extorquens).